Reading from the N-terminus, the 141-residue chain is Hemoglobin subunit alpha-1/2 (141 aa).

The 141-residue stretch at 1 to 141 folds into the Globin domain; it reads VLSPADKTNV…VSTVLTSKYR (141 aa). S3 bears the Phosphoserine mark. K7 is modified (N6-succinyllysine). Phosphothreonine is present on T8. At K11 the chain carries N6-succinyllysine. K16 carries the N6-acetyllysine; alternate modification. K16 bears the N6-succinyllysine; alternate mark. Y24 bears the Phosphotyrosine mark. S35 carries the post-translational modification Phosphoserine. Residue K40 is modified to N6-succinyllysine. S49 carries the phosphoserine modification. H58 provides a ligand contact to O2. Residue H87 participates in heme b binding. S102 bears the Phosphoserine mark. The residue at position 108 (T108) is a Phosphothreonine. Phosphoserine is present on residues S124 and S131. Phosphothreonine occurs at positions 134 and 137. Residue S138 is modified to Phosphoserine.

Belongs to the globin family. As to quaternary structure, heterotetramer of two alpha chains and two beta chains. In terms of tissue distribution, red blood cells.

Functionally, involved in oxygen transport from the lung to the various peripheral tissues. The polypeptide is Hemoglobin subunit alpha-1/2 (Macaca sinica (Toque macaque)).